The primary structure comprises 109 residues: Phosphoribosyl-ATP pyrophosphatase (109 aa).

The protein belongs to the PRA-PH family.

Its subcellular location is the cytoplasm. It carries out the reaction 1-(5-phospho-beta-D-ribosyl)-ATP + H2O = 1-(5-phospho-beta-D-ribosyl)-5'-AMP + diphosphate + H(+). The protein operates within amino-acid biosynthesis; L-histidine biosynthesis; L-histidine from 5-phospho-alpha-D-ribose 1-diphosphate: step 2/9. The protein is Phosphoribosyl-ATP pyrophosphatase of Sphingopyxis alaskensis (strain DSM 13593 / LMG 18877 / RB2256) (Sphingomonas alaskensis).